Consider the following 75-residue polypeptide: Large ribosomal subunit protein bL31 (75 aa).

Belongs to the bacterial ribosomal protein bL31 family. Type A subfamily. As to quaternary structure, part of the 50S ribosomal subunit.

Binds the 23S rRNA. This is Large ribosomal subunit protein bL31 from Chlorobium phaeovibrioides (strain DSM 265 / 1930) (Prosthecochloris vibrioformis (strain DSM 265)).